Reading from the N-terminus, the 373-residue chain is Zinc finger CCCH domain-containing protein 15 homolog (373 aa).

Positions 1–27 are disordered; that stretch reads MPPKQAQSKKTVEKEKKKKVEDKTFGL. Positions 10-25 are enriched in basic and acidic residues; the sequence is KTVEKEKKKKVEDKTF. 2 consecutive C3H1-type zinc fingers follow at residues 95-123 and 167-205; these read DPKS…HDLA and KPTA…HCLP. Positions 252-326 form a coiled coil; the sequence is KEEKRLQKEK…ALANQINTSL (75 aa). The disordered stretch occupies residues 325–373; that stretch reads SLFTDGGVLPSDDDDDDDDDDDDDEDGDDEEEDDDEEEGEYEEEEASDE. A compositionally biased stretch (acidic residues) spans 335–373; the sequence is SDDDDDDDDDDDDDEDGDDEEEDDDEEEGEYEEEEASDE.

It belongs to the ZC3H15/TMA46 family.

The protein is Zinc finger CCCH domain-containing protein 15 homolog of Dictyostelium discoideum (Social amoeba).